The primary structure comprises 308 residues: Cis-prenyltransferase 4, chloroplastic (308 aa).

A chloroplast-targeting transit peptide spans 1-45 (MAFSLQLQQIFVSYTRFCSQPKSITNPLISLKLPSIHPLAFAQNA). Asp-84 is a catalytic residue.

This sequence belongs to the UPP synthase family. Requires Mg(2+) as cofactor. In terms of tissue distribution, widely expressed.

It localises to the plastid. The protein localises to the chloroplast. Functionally, uses neryl diphosphate and geranyl diphosphate to catalyze the cis-prenyl chain elongation and produce polyprenyl diphosphate with a chain of 55 carbons. The protein is Cis-prenyltransferase 4, chloroplastic of Solanum lycopersicum (Tomato).